Here is a 476-residue protein sequence, read N- to C-terminus: Aspartyl/glutamyl-tRNA(Asn/Gln) amidotransferase subunit B (476 aa).

The protein belongs to the GatB/GatE family. GatB subfamily. As to quaternary structure, heterotrimer of A, B and C subunits.

The enzyme catalyses L-glutamyl-tRNA(Gln) + L-glutamine + ATP + H2O = L-glutaminyl-tRNA(Gln) + L-glutamate + ADP + phosphate + H(+). It catalyses the reaction L-aspartyl-tRNA(Asn) + L-glutamine + ATP + H2O = L-asparaginyl-tRNA(Asn) + L-glutamate + ADP + phosphate + 2 H(+). Allows the formation of correctly charged Asn-tRNA(Asn) or Gln-tRNA(Gln) through the transamidation of misacylated Asp-tRNA(Asn) or Glu-tRNA(Gln) in organisms which lack either or both of asparaginyl-tRNA or glutaminyl-tRNA synthetases. The reaction takes place in the presence of glutamine and ATP through an activated phospho-Asp-tRNA(Asn) or phospho-Glu-tRNA(Gln). This Lactobacillus acidophilus (strain ATCC 700396 / NCK56 / N2 / NCFM) protein is Aspartyl/glutamyl-tRNA(Asn/Gln) amidotransferase subunit B.